The chain runs to 155 residues: MSRRGTAEEKTAKSDPIYRNRLVNMLVNRILKHGKKSLAYQIIYRAMKKIQQKTETNPLSVLRQAIRGVTPDIAVKARRVGGSTHQVPIEIGSTQGKALAIRWLLGASRKRPGRNMAFKLSSELVDAAKGSGDAIRKKEETHRMAEANXAFAHFR.

It belongs to the universal ribosomal protein uS7 family. In terms of assembly, part of the 30S ribosomal subunit.

It localises to the plastid. It is found in the chloroplast. Its function is as follows. One of the primary rRNA binding proteins, it binds directly to 16S rRNA where it nucleates assembly of the head domain of the 30S subunit. In Gunnera chilensis (Chilean rhubarb), this protein is Small ribosomal subunit protein uS7c (rps7).